A 1385-amino-acid polypeptide reads, in one-letter code: DNA-directed RNA polymerase subunit beta (1385 aa).

Belongs to the RNA polymerase beta chain family. As to quaternary structure, the RNAP catalytic core consists of 2 alpha, 1 beta, 1 beta' and 1 omega subunit. When a sigma factor is associated with the core the holoenzyme is formed, which can initiate transcription.

It carries out the reaction RNA(n) + a ribonucleoside 5'-triphosphate = RNA(n+1) + diphosphate. DNA-dependent RNA polymerase catalyzes the transcription of DNA into RNA using the four ribonucleoside triphosphates as substrates. In Sulfurovum sp. (strain NBC37-1), this protein is DNA-directed RNA polymerase subunit beta.